We begin with the raw amino-acid sequence, 510 residues long: NAD(P)H-quinone oxidoreductase subunit 2, chloroplastic (510 aa).

13 helical membrane passes run 24-44 (LLLFHGSFIFPECILIFGLIL), 59-79 (WFYFISSTSLVMSITALLFRW), 99-119 (IFQFLILLCSTLCIPLSVEYI), 124-144 (MAITEFLLFVLTATLGGMFLC), 149-169 (LITIFVAPECFSLCSYLLSGY), 183-203 (YLLMGGASSSILVHGFSWLYG), 229-249 (ISIALISITVGIGFKLSPAPF), 295-315 (WHLLLEILAILSMILGNLIAI), 323-343 (MLAYSSIGQIGYVIIGIIVGD), 354-374 (YMLFYISMNLGTFACIVSFGL), 395-415 (ALSLALCLLSLGGLPPLAGFF), 418-438 (LYLFWCGWQAGLYFLVSMGLL), and 484-504 (MTVCVIASTIPGISMNPILAI).

Belongs to the complex I subunit 2 family. As to quaternary structure, NDH is composed of at least 16 different subunits, 5 of which are encoded in the nucleus.

Its subcellular location is the plastid. The protein localises to the chloroplast thylakoid membrane. The enzyme catalyses a plastoquinone + NADH + (n+1) H(+)(in) = a plastoquinol + NAD(+) + n H(+)(out). It carries out the reaction a plastoquinone + NADPH + (n+1) H(+)(in) = a plastoquinol + NADP(+) + n H(+)(out). In terms of biological role, NDH shuttles electrons from NAD(P)H:plastoquinone, via FMN and iron-sulfur (Fe-S) centers, to quinones in the photosynthetic chain and possibly in a chloroplast respiratory chain. The immediate electron acceptor for the enzyme in this species is believed to be plastoquinone. Couples the redox reaction to proton translocation, and thus conserves the redox energy in a proton gradient. The sequence is that of NAD(P)H-quinone oxidoreductase subunit 2, chloroplastic from Sisyrinchium montanum (Strict blue-eyed grass).